We begin with the raw amino-acid sequence, 554 residues long: 2-succinyl-5-enolpyruvyl-6-hydroxy-3-cyclohexene-1-carboxylate synthase (554 aa).

The protein belongs to the TPP enzyme family. MenD subfamily. As to quaternary structure, homodimer. Mg(2+) serves as cofactor. Mn(2+) is required as a cofactor. Requires thiamine diphosphate as cofactor.

The enzyme catalyses isochorismate + 2-oxoglutarate + H(+) = 5-enolpyruvoyl-6-hydroxy-2-succinyl-cyclohex-3-ene-1-carboxylate + CO2. It participates in quinol/quinone metabolism; 1,4-dihydroxy-2-naphthoate biosynthesis; 1,4-dihydroxy-2-naphthoate from chorismate: step 2/7. Its pathway is quinol/quinone metabolism; menaquinone biosynthesis. Its function is as follows. Catalyzes the thiamine diphosphate-dependent decarboxylation of 2-oxoglutarate and the subsequent addition of the resulting succinic semialdehyde-thiamine pyrophosphate anion to isochorismate to yield 2-succinyl-5-enolpyruvyl-6-hydroxy-3-cyclohexene-1-carboxylate (SEPHCHC). In Lactococcus lactis subsp. cremoris (strain SK11), this protein is 2-succinyl-5-enolpyruvyl-6-hydroxy-3-cyclohexene-1-carboxylate synthase.